Here is a 218-residue protein sequence, read N- to C-terminus: Copper acquisition factor BIM1 (218 aa).

An N-terminal signal peptide occupies residues 1–19; it reads MFALKFILITSFIASTALA. Cu(2+) contacts are provided by histidine 20 and histidine 65. 2 disulfides stabilise this stretch: cysteine 40–cysteine 144 and cysteine 110–cysteine 161. Residues asparagine 87, asparagine 91, and asparagine 124 are each glycosylated (N-linked (GlcNAc...) asparagine). Residue aspartate 138 coordinates Cu(2+). Residues asparagine 158 and asparagine 170 are each glycosylated (N-linked (GlcNAc...) asparagine). Residues 160–194 form a disordered region; the sequence is TCTDDASRTSNASSTSSGSATATSAAATSSSSGTS. The span at 167-194 shows a compositional bias: low complexity; the sequence is RTSNASSTSSGSATATSAAATSSSSGTS. Serine 190 carries the GPI-anchor amidated serine lipid modification. A propeptide spans 191 to 218 (removed in mature form); the sequence is SGTSGAIKEVVGLGALSLALGIAGLIIL.

Belongs to the X325 family. It depends on Cu(2+) as a cofactor.

The protein localises to the cell membrane. Lytic polysaccharide monooxygenase-like protein that has diverged to biological functions other than polysaccharide degradation since it does not perform oxidative cleavage of polysaccharides. Cell surface-bound protein that functions in the copper-accumulation pathway shared by the CUF1-dependent copper transporter CTR1. Involved in maintaining cell wall integrity during copper deficiency. Binds Cu(2+) with an estimated 1:1 stoichiometry and might serve as an extracellular copper ligand. FRE4 and FRE7 metalloreductases probably function together with CTR1 and BIM1 to liberate the Cu(2+) bound to the BIM1 copper-binding site for subsequent import of Cu(+) into the cell by CTR1, via the reduction of BIM1-bound Cu(2+) to Cu(+) to reduce binding affinity for BIM1 but increase affinity for CTR1. Facilitates copper acquisition in the brain of mammalian hosts and acts as a copper-dependent virulence trait in fungal meningitis. While BIM1 plays a critical role in cryptococcal meningitis, at least in part through its role in copper acquisition, it could play additional roles during copper limitation or as a means to invade and colonize host tissues in the brain, by compromising host carbohydrate integrity via its lytic polysaccharide monooxygenase (LPMO) activity, which has still to be determined. In Cryptococcus neoformans var. neoformans serotype D (strain JEC21 / ATCC MYA-565) (Filobasidiella neoformans), this protein is Copper acquisition factor BIM1.